The following is a 1016-amino-acid chain: Probably inactive leucine-rich repeat receptor-like protein kinase At3g28040 (1016 aa).

The N-terminal stretch at 1-26 (MGKQRRTMISFTLFLTLTMMSSLING) is a signal peptide. Residues 27–646 (DTDSIQLNDD…FHRRMFLSVS (620 aa)) lie on the Extracellular side of the membrane. 20 LRR repeats span residues 102-124 (RLKVLSLSNNNFTGNINALSNNN), 125-147 (HLQKLDLSHNNLSGQIPSSLGSI), 149-171 (SLQHLDLTGNSFSGTLSDDLFNN), 174-196 (SLRYLSLSHNHLEGQIPSTLFRC), 198-219 (VLNSLNLSRNRFSGNPSFVSGI), 224-245 (RLRALDLSSNSLSGSIPLGILS), 248-270 (NLKELQLQRNQFSGALPSDIGLC), 272-295 (HLNRVDLSSNHFSGELPRTLQKLK), 296-318 (SLNHFDVSNNLLSGDFPPWIGDM), 320-342 (GLVHLDFSSNELTGKLPSSISNL), 344-366 (SLKDLNLSENKLSGEVPESLESC), 368-390 (ELMIVQLKGNDFSGNIPDGFFDL), 391-413 (GLQEMDFSGNGLTGSIPRGSSRL), 416-438 (SLIRLDLSHNSLTGSIPGEVGLF), 440-462 (HMRYLNLSWNHFNTRVPPEIEFL), 464-486 (NLTVLDLRNSALIGSVPADICES), 488-510 (SLQILQLDGNSLTGSIPEGIGNC), 512-535 (SLKLLSLSHNNLTGPIPKSLSNLQ), 536-559 (ELKILKLEANKLSGEIPKELGDLQ), and 560-582 (NLLLVNVSFNRLIGRLPLGDVFQ). N-linked (GlcNAc...) asparagine glycosylation is found at N112, N135, and N171. A glycan (N-linked (GlcNAc...) asparagine) is linked at N203. N-linked (GlcNAc...) asparagine glycosylation occurs at N349. 4 N-linked (GlcNAc...) asparagine glycosylation sites follow: N445, N464, N509, and N522. Residue N565 is glycosylated (N-linked (GlcNAc...) asparagine). Residues 647–667 (VIVAISAAILIFSGVIIITLL) form a helical membrane-spanning segment. At 668–1016 (NASVRRRLAF…PVPHRIMDSF (349 aa)) the chain is on the cytoplasmic side. The Protein kinase domain occupies 726–1013 (LNKASRIGEG…INSPVPHRIM (288 aa)). ATP is bound by residues 732 to 740 (IGEGVFGTV) and K755. Y841 and Y898 each carry phosphotyrosine.

It belongs to the protein kinase superfamily. Ser/Thr protein kinase family.

It localises to the membrane. This Arabidopsis thaliana (Mouse-ear cress) protein is Probably inactive leucine-rich repeat receptor-like protein kinase At3g28040.